The primary structure comprises 411 residues: Inhibin beta B chain (411 aa).

Positions 1 to 28 are cleaved as a signal peptide; sequence MDGLPGRALGAACLLLLAAGWLGPEAWG. A disordered region spans residues 27–69; it reads WGSPTPPPSPAAPPPPPPPGAPGGSQDTCTSCGGGGGGFRRPE. Residues 29–296 constitute a propeptide that is removed on maturation; the sequence is SPTPPPSPAA…GDSRHRIRKR (268 aa). Positions 30 to 47 are enriched in pro residues; sequence PTPPPSPAAPPPPPPPGA. A glycan (N-linked (GlcNAc...) asparagine) is linked at Asn97. Cystine bridges form between Cys300–Cys308, Cys307–Cys376, Cys336–Cys408, and Cys340–Cys410.

The protein belongs to the TGF-beta family. In terms of assembly, dimeric, linked by one or more disulfide bonds. Inhibin B is a dimer of alpha and beta-B. Activin B is a homodimer of beta-B. Activin AB is a dimer of beta-A and beta-B. Interacts with FST and FSTL3. Alpha- and beta-B subunits are the predominant forms found in rat testis. Also expressed in ovary.

It is found in the secreted. Its function is as follows. Inhibins and activins inhibit and activate, respectively, the secretion of follitropin by the pituitary gland. Inhibins/activins are involved in regulating a number of diverse functions such as hypothalamic and pituitary hormone secretion, gonadal hormone secretion, germ cell development and maturation, erythroid differentiation, insulin secretion, nerve cell survival, embryonic axial development or bone growth, depending on their subunit composition. Inhibins appear to oppose the functions of activins. Activin B is a dimer of alpha and beta-B that plays a role in several essential biological processes including embryonic development, stem cell maintenance and differentiation, haematopoiesis, cell proliferation and wound healing. Signals through type I receptor ACVR1C, abundantly expressed in pancreatic beta cells, and type II receptors like ACVR2A. Upon ligand binding, these receptors phosphorylate intracellular signaling mediators SMAD2 and SMAD3, which form a complex with SMAD4, translocate to the nucleus, and regulate gene expression. Plays a crucial role in the induction of hepcidin by inflammation through activation of ACVR1C and subsequent phosphorylation of SMAD1/5/8. Regulates adipocyte lipid metabolism by decreasing non-esterified fatty acids and glycerol release and increases intracellular triglyceride content. Stimulates wound healing by promoting cell migration and hair follicle regeneration through the JNK and ERK signaling pathways downstream of RHOA. In terms of biological role, inhibin B is a dimer of alpha and beta-B that plays a crucial role in the regulation of the reproductive system by inhibiting the secretion of follicle-stimulating hormone (FSH) from the anterior pituitary gland. Thereby, maintains reproductive homeostasis in both males and females. Acts as a more potent suppressor of FSH release than inhibin A. Functions as competitive receptor antagonist binding activin type II receptors with high affinity in the presence of the TGF-beta type III coreceptor/TGFBR3L. This Rattus norvegicus (Rat) protein is Inhibin beta B chain (Inhbb).